A 204-amino-acid polypeptide reads, in one-letter code: Small ribosomal subunit protein uS4 (204 aa).

Residues 25 to 45 (AVPSRRAYPPGQHGQARKKRS) are disordered. In terms of domain architecture, S4 RNA-binding spans 92–152 (MRLDNIIFRL…NKENSRRLAE (61 aa)).

It belongs to the universal ribosomal protein uS4 family. In terms of assembly, part of the 30S ribosomal subunit. Contacts protein S5. The interaction surface between S4 and S5 is involved in control of translational fidelity.

Its function is as follows. One of the primary rRNA binding proteins, it binds directly to 16S rRNA where it nucleates assembly of the body of the 30S subunit. In terms of biological role, with S5 and S12 plays an important role in translational accuracy. The polypeptide is Small ribosomal subunit protein uS4 (Cyanothece sp. (strain PCC 7425 / ATCC 29141)).